Consider the following 713-residue polypeptide: MSIDYKKLWPEALDFESLDQNAQHVDPKDEDFDYAEAFQELDLEEVKQDIESVMTDSQEWWPADYGHYGPLFIRMAWHSAGTYRTTDGRGGASGGYQRLPPVDSWPDNANLDKARRVLWPVKQKYGQNLSWADLIVLAGNVALESMGFETFGFAGGREDDFAPDESVDWGPEEEMEASDRYDEAGELPEPLGATVMGLIYVNPEGPDGEPDLEGSAANIRESFGRMAMNDEETVALIAGGHTFGKVHGADDPDEHVGGPPADAPIDLQGLGWENDFGEGKGPDTITSGIEGPWNTTPTQWDMSYIDNLLDYEWWPEKGPGGAWQWTTESGELDAAAPSVDGSSEKEDVMMLTTDVALKRDPDYREVLERFQENPDEFQEAFAKAWYKLIHRDMGPPERFLGPEVPEETLIWQDPLPDADYDSIGDEEVAELKEALLDSELSVAQLVKTAWASASTYRDSDKRGGANGARIRLEPQRSWEVNEPAALADALETYEAIQEEFNSARSDAVRVSLADLIVLGGNAAVEQAAADAGYDVTVPFEPGRTDATPEQTDVESFEALKPKADGFRNYLSDEAERKPEELLVDKADLLNLTPPEMTVLVGGMRALGATYQDTDRGVFTDEPGTLTNDFFVNILDMDYEWEPVSEDREVFELRDRETGEVEWEGTRFDLIFGSDSRLRAISEVYGADDGEAEFVEDFVDTWSKVMKLDRFDLE.

A cross-link (tryptophyl-tyrosyl-methioninium (Trp-Tyr) (with M-226)) is located at residues 77-200 (WHSAGTYRTT…LGATVMGLIY (124 aa)). His-78 serves as the catalytic Proton acceptor. A cross-link (tryptophyl-tyrosyl-methioninium (Tyr-Met) (with W-77)) is located at residues 200–226 (YVNPEGPDGEPDLEGSAANIRESFGRM). His-241 is a binding site for heme b.

Belongs to the peroxidase family. Peroxidase/catalase subfamily. Homodimer or homotetramer. Heme b is required as a cofactor. Post-translationally, formation of the three residue Trp-Tyr-Met cross-link is important for the catalase, but not the peroxidase activity of the enzyme.

It carries out the reaction H2O2 + AH2 = A + 2 H2O. It catalyses the reaction 2 H2O2 = O2 + 2 H2O. Bifunctional enzyme with both catalase and broad-spectrum peroxidase activity. The sequence is that of Catalase-peroxidase from Natronomonas pharaonis (strain ATCC 35678 / DSM 2160 / CIP 103997 / JCM 8858 / NBRC 14720 / NCIMB 2260 / Gabara) (Halobacterium pharaonis).